A 398-amino-acid chain; its full sequence is 1-deoxy-D-xylulose 5-phosphate reductoisomerase (398 aa).

7 residues coordinate NADPH: Thr-11, Gly-12, Ser-13, Ile-14, Arg-38, Asn-39, and Asn-125. 1-deoxy-D-xylulose 5-phosphate is bound at residue Lys-126. Glu-127 contacts NADPH. Asp-151 serves as a coordination point for Mn(2+). 1-deoxy-D-xylulose 5-phosphate contacts are provided by Ser-152, Glu-153, Ser-179, and His-202. Glu-153 is a binding site for Mn(2+). Residue Gly-208 participates in NADPH binding. The 1-deoxy-D-xylulose 5-phosphate site is built by Ser-215, Asn-220, Lys-221, and Glu-224. Glu-224 contributes to the Mn(2+) binding site.

Belongs to the DXR family. Mg(2+) is required as a cofactor. It depends on Mn(2+) as a cofactor.

It catalyses the reaction 2-C-methyl-D-erythritol 4-phosphate + NADP(+) = 1-deoxy-D-xylulose 5-phosphate + NADPH + H(+). It functions in the pathway isoprenoid biosynthesis; isopentenyl diphosphate biosynthesis via DXP pathway; isopentenyl diphosphate from 1-deoxy-D-xylulose 5-phosphate: step 1/6. Functionally, catalyzes the NADPH-dependent rearrangement and reduction of 1-deoxy-D-xylulose-5-phosphate (DXP) to 2-C-methyl-D-erythritol 4-phosphate (MEP). This is 1-deoxy-D-xylulose 5-phosphate reductoisomerase from Burkholderia cenocepacia (strain HI2424).